A 464-amino-acid polypeptide reads, in one-letter code: ATP-dependent protease ATPase subunit HslU (464 aa).

ATP is bound by residues V18, 60–65, D277, E342, and R414; that span reads GVGKTE.

The protein belongs to the ClpX chaperone family. HslU subfamily. In terms of assembly, a double ring-shaped homohexamer of HslV is capped on each side by a ring-shaped HslU homohexamer. The assembly of the HslU/HslV complex is dependent on binding of ATP.

The protein resides in the cytoplasm. ATPase subunit of a proteasome-like degradation complex; this subunit has chaperone activity. The binding of ATP and its subsequent hydrolysis by HslU are essential for unfolding of protein substrates subsequently hydrolyzed by HslV. HslU recognizes the N-terminal part of its protein substrates and unfolds these before they are guided to HslV for hydrolysis. The chain is ATP-dependent protease ATPase subunit HslU from Lactobacillus delbrueckii subsp. bulgaricus (strain ATCC BAA-365 / Lb-18).